A 264-amino-acid chain; its full sequence is Phosphatidylserine decarboxylase proenzyme (264 aa).

Residues D86, H142, and S226 each act as charge relay system; for autoendoproteolytic cleavage activity in the active site. The active-site Schiff-base intermediate with substrate; via pyruvic acid; for decarboxylase activity is the S226. S226 is subject to Pyruvic acid (Ser); by autocatalysis.

This sequence belongs to the phosphatidylserine decarboxylase family. PSD-B subfamily. Prokaryotic type I sub-subfamily. In terms of assembly, heterodimer of a large membrane-associated beta subunit and a small pyruvoyl-containing alpha subunit. The cofactor is pyruvate. In terms of processing, is synthesized initially as an inactive proenzyme. Formation of the active enzyme involves a self-maturation process in which the active site pyruvoyl group is generated from an internal serine residue via an autocatalytic post-translational modification. Two non-identical subunits are generated from the proenzyme in this reaction, and the pyruvate is formed at the N-terminus of the alpha chain, which is derived from the carboxyl end of the proenzyme. The autoendoproteolytic cleavage occurs by a canonical serine protease mechanism, in which the side chain hydroxyl group of the serine supplies its oxygen atom to form the C-terminus of the beta chain, while the remainder of the serine residue undergoes an oxidative deamination to produce ammonia and the pyruvoyl prosthetic group on the alpha chain. During this reaction, the Ser that is part of the protease active site of the proenzyme becomes the pyruvoyl prosthetic group, which constitutes an essential element of the active site of the mature decarboxylase.

Its subcellular location is the cell membrane. It catalyses the reaction a 1,2-diacyl-sn-glycero-3-phospho-L-serine + H(+) = a 1,2-diacyl-sn-glycero-3-phosphoethanolamine + CO2. It participates in phospholipid metabolism; phosphatidylethanolamine biosynthesis; phosphatidylethanolamine from CDP-diacylglycerol: step 2/2. In terms of biological role, catalyzes the formation of phosphatidylethanolamine (PtdEtn) from phosphatidylserine (PtdSer). This Geobacillus kaustophilus (strain HTA426) protein is Phosphatidylserine decarboxylase proenzyme.